The chain runs to 514 residues: Anthranilate synthase component 1 (514 aa).

L-tryptophan contacts are provided by residues Thr-40 and 291–293 (PYM). Residue 328-329 (GT) coordinates chorismate. Residue Glu-361 participates in Mg(2+) binding. Chorismate is bound by residues Tyr-449, Arg-469, 482–484 (GAG), and Gly-484. Residue Glu-497 participates in Mg(2+) binding.

This sequence belongs to the anthranilate synthase component I family. As to quaternary structure, heterotetramer consisting of two non-identical subunits: a beta subunit (TrpG) and a large alpha subunit (TrpE). Mg(2+) serves as cofactor.

The catalysed reaction is chorismate + L-glutamine = anthranilate + pyruvate + L-glutamate + H(+). It participates in amino-acid biosynthesis; L-tryptophan biosynthesis; L-tryptophan from chorismate: step 1/5. With respect to regulation, feedback inhibited by tryptophan. Part of a heterotetrameric complex that catalyzes the two-step biosynthesis of anthranilate, an intermediate in the biosynthesis of L-tryptophan. In the first step, the glutamine-binding beta subunit (TrpG) of anthranilate synthase (AS) provides the glutamine amidotransferase activity which generates ammonia as a substrate that, along with chorismate, is used in the second step, catalyzed by the large alpha subunit of AS (TrpE) to produce anthranilate. In the absence of TrpG, TrpE can synthesize anthranilate directly from chorismate and high concentrations of ammonia. This chain is Anthranilate synthase component 1 (trpE), found in Buchnera aphidicola subsp. Rhopalosiphum maidis.